The following is a 725-amino-acid chain: Catalase B (725 aa).

A signal peptide spans 1–15; it reads MRALSLASLIGIASA. Residues 16-27 constitute a propeptide that is removed on maturation; that stretch reads ACPYMTGELERR. N50 is a glycosylation site (N-linked (GlcNAc...) asparagine). Residue H101 is part of the active site. The N-linked (GlcNAc...) asparagine glycan is linked to N119. Residue N174 is part of the active site. Y388 provides a ligand contact to heme. 3 N-linked (GlcNAc...) asparagine glycosylation sites follow: N447, N550, and N645.

This sequence belongs to the catalase family. In terms of assembly, homotetramer. Heme is required as a cofactor.

Its subcellular location is the secreted. It carries out the reaction 2 H2O2 = O2 + 2 H2O. In terms of biological role, occurs in almost all aerobically respiring organisms and serves to protect cells from the toxic effects of hydrogen peroxide through its degradation into water and oxygen. The chain is Catalase B (catB) from Aspergillus oryzae (strain ATCC 42149 / RIB 40) (Yellow koji mold).